The following is a 1064-amino-acid chain: Phosphatidylinositol 4,5-bisphosphate 3-kinase catalytic subunit beta isoform (1064 aa).

The PI3K-ABD domain maps to 20-109 (SDGAISVDFL…LPVLKLVTRS (90 aa)). Residues 188–279 (GGKLVVAVHF…RTLPHFILVE (92 aa)) enclose the PI3K-RBD domain. Phosphoserine is present on Ser318. Residues 323 to 490 (NNNPFQITLV…NATALHITFP (168 aa)) enclose the C2 PI3K-type domain. Residues 404–412 (KVKTKKSTK) carry the Nuclear localization signal (NLS) motif. Residues 518-695 (ANVSSRGGKK…GVILEAYCRG (178 aa)) enclose the PIK helical domain. One can recognise a PI3K/PI4K catalytic domain in the interval 766-1047 (YVEKCKYMDS…KFDEALRESW (282 aa)). A G-loop region spans residues 772-778 (YMDSKMK). The catalytic loop stretch occupies residues 910–918 (GIGDRHSDN). The segment at 929–955 (HIDFGHILGNFKSKFGIKRERVPFILT) is activation loop. At Ser1064 the chain carries Phosphoserine; by autocatalysis.

It belongs to the PI3/PI4-kinase family. Heterodimer of a catalytic subunit PIK3CB and a p85 regulatory subunit (PIK3R1, PIK3R2 or PIK3R3). Interaction with PIK3R2 is required for nuclear localization and nuclear export. Part of a complex with PIK3R1 and PTEN. Binding to PTEN may antagonize the lipid kinase activity under normal growth conditions. Part of a complex involved in autophagosome formation composed of PIK3C3 and PIK3R4. Interacts with BECN1, ATG14 and RAB5A. Post-translationally, phosphorylation at Ser-1064 down-regulates lipid kinase activity. Autophosphorylation at Ser-1064 negatively regulates the phosphatidylinositol-4,5-bisphosphate 3-kinase activity.

It is found in the cytoplasm. The protein resides in the nucleus. It carries out the reaction a 1,2-diacyl-sn-glycero-3-phospho-(1D-myo-inositol-4,5-bisphosphate) + ATP = a 1,2-diacyl-sn-glycero-3-phospho-(1D-myo-inositol-3,4,5-trisphosphate) + ADP + H(+). The catalysed reaction is 1-octadecanoyl-2-(5Z,8Z,11Z,14Z)-eicosatetraenoyl-sn-glycero-3-phospho-1D-myo-inositol 4,5-bisphosphate + ATP = 1-octadecanoyl-2-(5Z,8Z,11Z,14Z-eicosatetraenoyl)-sn-glycero-3-phospho-(1D-myo-inositol 3,4,5-triphosphate) + ADP + H(+). It catalyses the reaction L-seryl-[protein] + ATP = O-phospho-L-seryl-[protein] + ADP + H(+). It participates in phospholipid metabolism; phosphatidylinositol phosphate biosynthesis. Functionally, phosphoinositide-3-kinase (PI3K) phosphorylates phosphatidylinositol (PI) derivatives at position 3 of the inositol ring to produce 3-phosphoinositides. Uses ATP and PtdIns(4,5)P2 (phosphatidylinositol 4,5-bisphosphate) to generate phosphatidylinositol 3,4,5-trisphosphate (PIP3). PIP3 plays a key role by recruiting PH domain-containing proteins to the membrane, including AKT1 and PDPK1, activating signaling cascades involved in cell growth, survival, proliferation, motility and morphology. Involved in the activation of AKT1 upon stimulation by G-protein coupled receptors (GPCRs) ligands such as CXCL12, sphingosine 1-phosphate, and lysophosphatidic acid. May also act downstream receptor tyrosine kinases. Required in different signaling pathways for stable platelet adhesion and aggregation. Plays a role in platelet activation signaling triggered by GPCRs, alpha-IIb/beta-3 integrins (ITGA2B/ ITGB3) and ITAM (immunoreceptor tyrosine-based activation motif)-bearing receptors such as GP6. Regulates the strength of adhesion of ITGA2B/ ITGB3 activated receptors necessary for the cellular transmission of contractile forces. Required for platelet aggregation induced by F2 (thrombin) and thromboxane A2 (TXA2). Has a role in cell survival. May have a role in cell migration. Involved in the early stage of autophagosome formation. Modulates the intracellular level of PtdIns3P (phosphatidylinositol 3-phosphate) and activates PIK3C3 kinase activity. May act as a scaffold, independently of its lipid kinase activity to positively regulate autophagy. May have a role in insulin signaling as scaffolding protein in which the lipid kinase activity is not required. May have a kinase-independent function in regulating cell proliferation and in clathrin-mediated endocytosis. Mediator of oncogenic signal in cell lines lacking PTEN. The lipid kinase activity is necessary for its role in oncogenic transformation. Required for the growth of ERBB2 and RAS driven tumors. Also has a protein kinase activity showing autophosphorylation. The sequence is that of Phosphatidylinositol 4,5-bisphosphate 3-kinase catalytic subunit beta isoform (Pik3cb) from Mus musculus (Mouse).